Consider the following 774-residue polypeptide: Probable E3 ubiquitin-protein ligase HECTD2 (774 aa).

The segment at 1-51 (MSEAARDLSPGAPPAVAAAAPEERKGKEPEREKLPPIVTAGAAAGLDRGSK) is disordered. A Phosphoserine modification is found at Ser9. The span at 21 to 34 (PEERKGKEPEREKL) shows a compositional bias: basic and acidic residues. The region spanning 435 to 774 (KRADLKKKLK…ISNSEGFGLE (340 aa)) is the HECT domain. Cys742 serves as the catalytic Glycyl thioester intermediate.

The catalysed reaction is S-ubiquitinyl-[E2 ubiquitin-conjugating enzyme]-L-cysteine + [acceptor protein]-L-lysine = [E2 ubiquitin-conjugating enzyme]-L-cysteine + N(6)-ubiquitinyl-[acceptor protein]-L-lysine.. The protein operates within protein modification; protein ubiquitination. Its function is as follows. E3 ubiquitin-protein ligase which accepts ubiquitin from an E2 ubiquitin-conjugating enzyme in the form of a thioester and then directly transfers the ubiquitin to targeted substrates. This is Probable E3 ubiquitin-protein ligase HECTD2 (Hectd2) from Mus musculus (Mouse).